The primary structure comprises 59 residues: Large ribosomal subunit protein bL32c (59 aa).

This sequence belongs to the bacterial ribosomal protein bL32 family.

It localises to the plastid. It is found in the chloroplast. The sequence is that of Large ribosomal subunit protein bL32c from Physcomitrium patens (Spreading-leaved earth moss).